Reading from the N-terminus, the 279-residue chain is MTARMEQRFADVAAEGRPVLVTYFMGGDPDFDTSLAIMKALQQAGADIIELGVPFSDPMADGPAIQLAGQRALKAGQTLAKTLELARRFRADDQRTPIVLMGYYNPIYIYGVERFLTDALEAGVDGMIVVDLPPEMDDELCIPALAKGISFIRLATPTTDDRRLPKVLENTSGFVYYVSMTGITGSALPDTSLIAGAVARIKAHTSLPVCVGFGVKTADHARAIGATADGVVVGTAIVNQIASSLTEEGRATEATVPGVEALVRGLAAGVRAARLAAAE.

Active-site proton acceptor residues include E50 and D61.

This sequence belongs to the TrpA family. As to quaternary structure, tetramer of two alpha and two beta chains.

It catalyses the reaction (1S,2R)-1-C-(indol-3-yl)glycerol 3-phosphate + L-serine = D-glyceraldehyde 3-phosphate + L-tryptophan + H2O. It participates in amino-acid biosynthesis; L-tryptophan biosynthesis; L-tryptophan from chorismate: step 5/5. In terms of biological role, the alpha subunit is responsible for the aldol cleavage of indoleglycerol phosphate to indole and glyceraldehyde 3-phosphate. This chain is Tryptophan synthase alpha chain, found in Sinorhizobium medicae (strain WSM419) (Ensifer medicae).